The primary structure comprises 212 residues: Putative inactive 6-phospho-alpha-glucosidase (212 aa).

Position 4–70 (4–70) interacts with NAD(+); it reads FSVVVAGGGS…PDIAFSYTTD (67 aa). Residues Cys-169 and His-200 each contribute to the Mn(2+) site.

The protein belongs to the glycosyl hydrolase 4 family.

The protein is Putative inactive 6-phospho-alpha-glucosidase of Escherichia coli (strain K12).